A 214-amino-acid polypeptide reads, in one-letter code: Probable nicotinate-nucleotide adenylyltransferase (214 aa).

It belongs to the NadD family.

The enzyme catalyses nicotinate beta-D-ribonucleotide + ATP + H(+) = deamido-NAD(+) + diphosphate. It participates in cofactor biosynthesis; NAD(+) biosynthesis; deamido-NAD(+) from nicotinate D-ribonucleotide: step 1/1. Its function is as follows. Catalyzes the reversible adenylation of nicotinate mononucleotide (NaMN) to nicotinic acid adenine dinucleotide (NaAD). The polypeptide is Probable nicotinate-nucleotide adenylyltransferase (Aeromonas hydrophila subsp. hydrophila (strain ATCC 7966 / DSM 30187 / BCRC 13018 / CCUG 14551 / JCM 1027 / KCTC 2358 / NCIMB 9240 / NCTC 8049)).